We begin with the raw amino-acid sequence, 429 residues long: Glutamate-1-semialdehyde 2,1-aminomutase 2 (429 aa).

Position 268 is an N6-(pyridoxal phosphate)lysine (Lys268).

This sequence belongs to the class-III pyridoxal-phosphate-dependent aminotransferase family. HemL subfamily. As to quaternary structure, homodimer. It depends on pyridoxal 5'-phosphate as a cofactor.

It localises to the cytoplasm. The enzyme catalyses (S)-4-amino-5-oxopentanoate = 5-aminolevulinate. Its pathway is porphyrin-containing compound metabolism; protoporphyrin-IX biosynthesis; 5-aminolevulinate from L-glutamyl-tRNA(Glu): step 2/2. In Bacillus cereus (strain B4264), this protein is Glutamate-1-semialdehyde 2,1-aminomutase 2.